Consider the following 99-residue polypeptide: Ribosomal processing cysteine protease Prp (99 aa).

The active-site Proton donor is the His16. Catalysis depends on Cys28, which acts as the Nucleophile.

This sequence belongs to the Prp family. Homodimer.

In terms of biological role, an essential cysteine protease that cleaves the N-terminus from ribosomal protein bL27. The polypeptide is Ribosomal processing cysteine protease Prp (Mycoplasma genitalium (strain ATCC 33530 / DSM 19775 / NCTC 10195 / G37) (Mycoplasmoides genitalium)).